We begin with the raw amino-acid sequence, 535 residues long: Arylsulfatase K (535 aa).

The first 22 residues, 1 to 22 (MLLLWLSVFAASALAAPDRGAG), serve as a signal peptide directing secretion. Ca(2+) contacts are provided by D44 and C84. Residue C84 is the Nucleophile of the active site. At C84 the chain carries 3-oxoalanine (Cys). N112 carries an N-linked (GlcNAc...) asparagine glycan. K132 is a substrate binding site. N-linked (GlcNAc...) asparagine glycosylation is present at N197. Residue H255 participates in substrate binding. N-linked (GlcNAc...) asparagine glycosylation is present at N266. Residues D317 and H318 each coordinate Ca(2+). 3 N-linked (GlcNAc...) asparagine glycosylation sites follow: N379, N417, and N502.

It belongs to the sulfatase family. It depends on Ca(2+) as a cofactor. In terms of processing, the conversion to 3-oxoalanine (also known as C-formylglycine, FGly), of a serine or cysteine residue in prokaryotes and of a cysteine residue in eukaryotes, is critical for catalytic activity. Post-translationally, the 75-kDa precursor undergoes proteolytic processing to yield a 23 kDa form. N-glycosylated with both high mannose and complex type sugars.

The protein resides in the secreted. Its subcellular location is the lysosome. The catalysed reaction is an aryl sulfate + H2O = a phenol + sulfate + H(+). It carries out the reaction Hydrolysis of the 2-sulfate groups of the 2-O-sulfo-D-glucuronate residues of chondroitin sulfate, heparin and heparitin sulfate.. Catalyzes the hydrolysis of pseudosubstrates such as p-nitrocatechol sulfate and p-nitrophenyl sulfate. Catalyzes the hydrolysis of the 2-sulfate groups of the 2-O-sulfo-D-glucuronate residues of chondroitin sulfate, heparin and heparitin sulfate. Acts selectively on 2-sulfoglucuronate and lacks activity against 2-sulfoiduronate. This chain is Arylsulfatase K (ARSK), found in Canis lupus familiaris (Dog).